Here is a 161-residue protein sequence, read N- to C-terminus: MYRIGNGIDFHKLEINLNRPLILGGIECESEFALVGHSDADIILHAISDAILGALALGDIGQYFPDTDPSLKNIDSKIILVKCLELMKEKNFDLVNIDCTVIGERPKITPLKDRITKSLSNLLNLPLDCISVKATTTEKMGALGRQEGIGTFCSILLEKRS.

The a divalent metal cation site is built by D9 and H11. Residues 9 to 11 (DFH) and 37 to 38 (HS) contribute to the 4-CDP-2-C-methyl-D-erythritol 2-phosphate site. Residue H45 coordinates a divalent metal cation. 4-CDP-2-C-methyl-D-erythritol 2-phosphate-binding positions include 59–61 (DIG), 64–68 (FPDTD), 135–138 (TTTE), and R145.

This sequence belongs to the IspF family. As to quaternary structure, homotrimer. The cofactor is a divalent metal cation.

The enzyme catalyses 4-CDP-2-C-methyl-D-erythritol 2-phosphate = 2-C-methyl-D-erythritol 2,4-cyclic diphosphate + CMP. It participates in isoprenoid biosynthesis; isopentenyl diphosphate biosynthesis via DXP pathway; isopentenyl diphosphate from 1-deoxy-D-xylulose 5-phosphate: step 4/6. Involved in the biosynthesis of isopentenyl diphosphate (IPP) and dimethylallyl diphosphate (DMAPP), two major building blocks of isoprenoid compounds. Catalyzes the conversion of 4-diphosphocytidyl-2-C-methyl-D-erythritol 2-phosphate (CDP-ME2P) to 2-C-methyl-D-erythritol 2,4-cyclodiphosphate (ME-CPP) with a corresponding release of cytidine 5-monophosphate (CMP). The polypeptide is 2-C-methyl-D-erythritol 2,4-cyclodiphosphate synthase (Leptospira interrogans serogroup Icterohaemorrhagiae serovar Lai (strain 56601)).